The sequence spans 159 residues: Defense protein l(2)34Fc (159 aa).

The first 17 residues, 1–17 (MFRLLVLAACLAISVHA), serve as a signal peptide directing secretion. In terms of domain architecture, Reelin spans 18–159 (YSDGAPKAAC…GRVTKDIDVE (142 aa)). Cys-27 and Cys-99 are joined by a disulfide.

It belongs to the insect defense protein family.

It is found in the secreted. In terms of biological role, may have antimicrobial activity. A late response immune regulated gene that is negatively regulated by spz during the immune response. The polypeptide is Defense protein l(2)34Fc (l(2)34Fc) (Drosophila melanogaster (Fruit fly)).